Reading from the N-terminus, the 158-residue chain is Scytalone dehydratase-like protein CPUR_05428 (158 aa).

2 residues coordinate substrate: Tyr-24 and Tyr-44. Active-site residues include His-79 and His-104.

It belongs to the scytalone dehydratase family.

It functions in the pathway pigment biosynthesis. In terms of biological role, scytalone dehydratase-like protein; part of the ergochrome gene cluster responsible for the typical purple-black color of the ergot sclerotia. The ergochrome gene cluster produces several ergot pigments including the yellow ergochrome secalonic acid and its derivatives, as well as the red anthraquinones endocrocin and clavorubin. The pathway begins with the synthesis of atrochrysone thioester by the polyketide synthase (PKS) CPUR_05437. The atrochrysone carboxyl ACP thioesterase CPUR_05436 then breaks the thioester bond and releases the atrochrysone carboxylic acid from CPUR_05437. The atrochrysone carboxylic acid is then converted to atrochrysone which is further transformed into emodin anthrone. The next step is performed by the anthrone oxygenase CPUR_05434 that catalyzes the oxidation of emodinanthrone to emodin. Emodin is further modified to yield monodictyphenone via several steps involving CPUR_05427, CPUR_05428, CPUR_05429 and CPUR_05430. The short chain dehydrogenase/reductase CPUR_05418 then catalyzes the C-5 ketoreduction to give the xanthone skeleton of the monomeric units. Ergochromes formation requires further dimerization steps of different xanthone units, probably catalyzed by the cytochrome P450 monooxygenase CPUR_05419. CPUR_05425, CPUR_05426 and CPUR_05431 are unique to Claviceps, thus it is likely that they are involved in further modification of xanthone units or in their dimerization. The yellow ergochromes and the red anthraquinone pigments endocrocin and clavorubin are products from the same PKS derived precursors and the latter are likely shunt products in the pathway of xanthone biosynthesis. It is proposed that atrochrysone carboxylic acid released from the PKS CPUR_05437 can also be converted to endocrocin anthrone which is further oxidized into endocrocin by CPUR_05435. Endocrocin could be then modified to clavorubin, possibly by CPUR_05423 and CPUR_05431. Clavorubin is the principal anthraquinone metabolite produced by the cluster with a much higher yield compared to endocrocin. The chain is Scytalone dehydratase-like protein CPUR_05428 from Claviceps purpurea (strain 20.1) (Ergot fungus).